We begin with the raw amino-acid sequence, 440 residues long: Gamma-aminobutyric acid receptor subunit pi (440 aa).

The first 23 residues, 1–23 (MKRSLHLTFVCLSLFSARMCVQG), serve as a signal peptide directing secretion. The Extracellular portion of the chain corresponds to 24–241 (NQFNIEVSRS…LVLQFELQRN (218 aa)). Residues N43, N102, and N145 are each glycosylated (N-linked (GlcNAc...) asparagine). C160 and C174 are joined by a disulfide. N-linked (GlcNAc...) asparagine glycosylation is found at N196 and N228. A helical membrane pass occupies residues 242 to 262 (VLYFILETYVPSTFLVVLSWV). The Cytoplasmic portion of the chain corresponds to 263 to 270 (SFWISLDS). Residues 271 to 290 (VPARTCIGVTTVLSMTTLMI) traverse the membrane as a helical segment. Residues 291 to 301 (GSRTSLPNTNC) are Extracellular-facing. Residues 302–322 (FIKAIDVYLGICFSFVFGALL) traverse the membrane as a helical segment. The Cytoplasmic segment spans residues 323-419 (EYAVAHYSSL…NPSNVDRYSK (97 aa)). The chain crosses the membrane as a helical span at residues 420-440 (LLFPLIFMLANVFYWAYYMYF).

Belongs to the ligand-gated ion channel (TC 1.A.9) family. Gamma-aminobutyric acid receptor (TC 1.A.9.5) subfamily. GABRP sub-subfamily. Heteropentamer, formed by a combination of alpha (GABRA1-6), beta (GABRB1-3), gamma (GABRG1-3), delta (GABRD), epsilon (GABRE), rho (GABRR1-3), pi (GABRP) and theta (GABRQ) chains, each subunit exhibiting distinct physiological and pharmacological properties.

It localises to the cell membrane. The protein resides in the apical cell membrane. It carries out the reaction chloride(in) = chloride(out). Its function is as follows. Pi subunit of the heteropentameric ligand-gated chloride channel gated by gamma-aminobutyric acid (GABA). GABA-gated chloride channels, also named GABA(A) receptors (GABAAR), consist of five subunits arranged around a central pore and contain GABA active binding site(s) located at the alpha and beta subunit interfaces. When activated by GABA, GABAARs selectively allow the flow of chloride anions across the cell membrane down their electrochemical gradient. Pi-containing GABAARs are mostly located in peripheral tissues. In the uterus, pi subunits modulate uterus contraction by altering the sensitivity of GABAARs to pregnanolone. In the lungs, pi-containing GABAARs contribute to pulmonary fluid transport via luminal secretion of chloride. This chain is Gamma-aminobutyric acid receptor subunit pi (GABRP), found in Bos taurus (Bovine).